A 1142-amino-acid chain; its full sequence is Enamelin (1142 aa).

Positions 1-39 are cleaved as a signal peptide; it reads MLVLRCRLGTSFPKLDNLVPKGKMKILLVFLGLLGNSVA. Disordered stretches follow at residues 88–193, 214–326, 398–671, 874–955, 1020–1048, and 1062–1092; these read QYQM…ISNE, YYSE…PNIR, PANL…QNRW, CCAG…LRRN, VIGT…QQQR, and LAKH…PTEN. A compositionally biased stretch (basic residues) spans 103-114; sequence HPRKSSAPKRHN. 2 N-linked (GlcNAc...) asparagine glycosylation sites follow: asparagine 114 and asparagine 126. The segment covering 117-128 has biased composition (polar residues); that stretch reads DQTQETQKPNQT. Positions 140–162 are enriched in low complexity; it reads KQPSHNQPQPEEEAQPPQAFPPF. Residues 170 to 186 are compositionally biased toward pro residues; that stretch reads QQPPWQIPQRLPPPGYG. 2 positions are modified to phosphoserine: serine 191 and serine 216. The span at 223-234 shows a compositional bias: basic and acidic residues; it reads DFEKPKEEDPPK. Residues 240–285 show a composition bias toward polar residues; it reads TEPTANSTVTETNSTQPNPKGSQGGNDTSPTGNSTPGLNTGNNPPA. Residues asparagine 245, asparagine 252, asparagine 265, and asparagine 296 are each glycosylated (N-linked (GlcNAc...) asparagine). Basic and acidic residues predominate over residues 429–442; sequence RNEKIQNPKEKPLG. 3 stretches are compositionally biased toward polar residues: residues 452–470, 507–516, and 531–544; these read KNPT…NKSN, SDGQTQSQNL, and SETN…SSYQ. Asparagine 467 is a glycosylation site (N-linked (GlcNAc...) asparagine). Residue asparagine 534 is glycosylated (N-linked (GlcNAc...) asparagine). Over residues 556–588 the composition is skewed to basic and acidic residues; it reads AKEHFPAGRNTWDHQEISPPFKEDPGRQEEHLP. The segment covering 652–661 has biased composition (acidic residues); sequence NEEDPVDPTG. A compositionally biased stretch (polar residues) spans 924-934; sequence SPTSILPGQRN. An N-linked (GlcNAc...) asparagine glycan is attached at asparagine 934. A compositionally biased stretch (basic and acidic residues) spans 935–951; sequence SSEKRESQNPFRDDVST. Asparagine 1040 carries N-linked (GlcNAc...) asparagine glycosylation. Over residues 1068–1078 the composition is skewed to polar residues; that stretch reads STTGTPSSDGR.

Phosphorylated by FAM20C in vitro. Expressed in tooth particularly in odontoblast, ameloblast and cementoblast.

It localises to the secreted. The protein resides in the extracellular space. The protein localises to the extracellular matrix. Involved in the mineralization and structural organization of enamel. Involved in the extension of enamel during the secretory stage of dental enamel formation. The chain is Enamelin (ENAM) from Homo sapiens (Human).